The primary structure comprises 105 residues: Resistin-like beta (105 aa).

A signal peptide spans 1-23 (MKPTLCFLFILVSLFPLIVPGNA). Disulfide bonds link Cys49–Cys102, Cys61–Cys101, Cys70–Cys87, Cys72–Cys89, and Cys76–Cys91.

The protein belongs to the resistin/FIZZ family. As to quaternary structure, homodimer; disulfide-linked. Heterodimer with RETNLG. In terms of tissue distribution, strongly expressed in colon, and at lower levels in ileum. In colon, found throughout the crypt and surface epithelium and in goblet cells (at protein level). Specific to the gastrointestinal tract; not detected in other tissues tested.

It is found in the secreted. Functionally, probable hormone. The polypeptide is Resistin-like beta (Retnlb) (Mus musculus (Mouse)).